The primary structure comprises 255 residues: Leucyl/phenylalanyl-tRNA--protein transferase (255 aa).

This sequence belongs to the L/F-transferase family.

The protein localises to the cytoplasm. The enzyme catalyses N-terminal L-lysyl-[protein] + L-leucyl-tRNA(Leu) = N-terminal L-leucyl-L-lysyl-[protein] + tRNA(Leu) + H(+). It catalyses the reaction N-terminal L-arginyl-[protein] + L-leucyl-tRNA(Leu) = N-terminal L-leucyl-L-arginyl-[protein] + tRNA(Leu) + H(+). It carries out the reaction L-phenylalanyl-tRNA(Phe) + an N-terminal L-alpha-aminoacyl-[protein] = an N-terminal L-phenylalanyl-L-alpha-aminoacyl-[protein] + tRNA(Phe). Functionally, functions in the N-end rule pathway of protein degradation where it conjugates Leu, Phe and, less efficiently, Met from aminoacyl-tRNAs to the N-termini of proteins containing an N-terminal arginine or lysine. This Burkholderia pseudomallei (strain 1106a) protein is Leucyl/phenylalanyl-tRNA--protein transferase.